Reading from the N-terminus, the 430-residue chain is MSKIVKVVGREIMDSRGNPTVEADVYLESGHMGRAAAPSGASTGSREALELRDGDTSRYLGKGVETAVANINGAIAEALSGIDAINQEAVDNIMLRLDGTDNKEKLGANAILAVSLAVAKAAALSKGIELYEHIANLNNTSGKYSMPLPMMNILNGGEHADNNVDIQEFMIQPVGAESFKEGLRMGAEVFHALKKVLQKRGLSTAVGDEGGFAPNLASNEEALQVIVEAVENAGYKMGSDITLALDCAASEFYRDGKYELSGEGKSFTAEEFADYLAELCDRYPIISIEDGLDESDWDGWKVLTEKLGSKVQLVGDDLFVTNTRILKEGIDKSIANSILIKFNQIGSLTETLAAIAMAREAGYSAVISHRSGETEDATIADLAVGTAAGQIKTGSLCRSDRVAKYNQLLRIEGDLNGQAPYRGRQEVNAG.

Residue Gln167 participates in (2R)-2-phosphoglycerate binding. The active-site Proton donor is the Glu209. 3 residues coordinate Mg(2+): Asp246, Glu289, and Asp316. (2R)-2-phosphoglycerate contacts are provided by Lys341, Arg370, Ser371, and Lys392. Catalysis depends on Lys341, which acts as the Proton acceptor.

Belongs to the enolase family. Component of the RNA degradosome, a multiprotein complex involved in RNA processing and mRNA degradation. It depends on Mg(2+) as a cofactor.

It localises to the cytoplasm. The protein localises to the secreted. The protein resides in the cell surface. The enzyme catalyses (2R)-2-phosphoglycerate = phosphoenolpyruvate + H2O. The protein operates within carbohydrate degradation; glycolysis; pyruvate from D-glyceraldehyde 3-phosphate: step 4/5. Functionally, catalyzes the reversible conversion of 2-phosphoglycerate (2-PG) into phosphoenolpyruvate (PEP). It is essential for the degradation of carbohydrates via glycolysis. The chain is Enolase from Idiomarina loihiensis (strain ATCC BAA-735 / DSM 15497 / L2-TR).